The following is a 399-amino-acid chain: MADGIDRRADDKMEFNTSKEVTVAPTFEDMHLKESLLRGIYAYGYESPSAVQSRAIVQICKGRDTIAQAQSGTGKTATFSISALQVIDTVVRETQALVLSPTRELATQIQSVIMALGDYMNVQCHACIGGTNIGEDIRKLDYGQHVVSGTPGRVADMIRRRHLRTRHIKMLVLDEADELLNRGFREQIYDVYRYLPPATQVVVVSATLPYDVLDMTTKFMTDPVRVLVKRDELTLEGIKQYFIAVEKEEWKFDTLCDLYDTLTITQAVIFCNTRRKVDWLTDKMREANFTVSSMHGEMPQKERDSIMQDFRQGNSRVLISTDVWARGIDVQQVSLVINYDLPTNRENYIHRIGRSGRFGRKGVAINFVTSDDVRILRDIELYYSTQIDEMPMNVADLLS.

Residues 25 to 53 (PTFEDMHLKESLLRGIYAYGYESPSAVQS) carry the Q motif motif. Residues 56–226 (IVQICKGRDT…TKFMTDPVRV (171 aa)) enclose the Helicase ATP-binding domain. 69–76 (AQSGTGKT) is a binding site for ATP. The DEAD box motif lies at 174 to 177 (DEAD). Residues 237–398 (GIKQYFIAVE…EMPMNVADLL (162 aa)) form the Helicase C-terminal domain.

It belongs to the DEAD box helicase family. DDX48/FAL1 subfamily.

It is found in the nucleus. The protein localises to the nucleolus. It catalyses the reaction ATP + H2O = ADP + phosphate + H(+). In terms of biological role, ATP-dependent RNA helicase involved in 40S ribosomal subunit biogenesis. Required for the processing and cleavage of 35S pre-rRNA at sites A0, A1, and A2, leading to mature 18S rRNA. This is ATP-dependent RNA helicase fal1 (fal1) from Emericella nidulans (strain FGSC A4 / ATCC 38163 / CBS 112.46 / NRRL 194 / M139) (Aspergillus nidulans).